A 585-amino-acid chain; its full sequence is Arginine--tRNA ligase (585 aa).

Residues 126-136 carry the 'HIGH' region motif; sequence PNIAKEMHVGH.

This sequence belongs to the class-I aminoacyl-tRNA synthetase family. In terms of assembly, monomer.

The protein resides in the cytoplasm. The enzyme catalyses tRNA(Arg) + L-arginine + ATP = L-arginyl-tRNA(Arg) + AMP + diphosphate. The polypeptide is Arginine--tRNA ligase (Rippkaea orientalis (strain PCC 8801 / RF-1) (Cyanothece sp. (strain PCC 8801))).